Reading from the N-terminus, the 265-residue chain is (-)-isopiperitenol/(-)-carveol dehydrogenase, mitochondrial (265 aa).

A mitochondrion-targeting transit peptide spans 1 to 30 (MASVKKLAGKVAIVTGGASGIGEVTARLFA). 13-38 (IVTGGASGIGEVTARLFAERGARAVV) is a binding site for NAD(+). Ser147 serves as a coordination point for substrate. Tyr160 serves as the catalytic Proton acceptor.

The protein belongs to the short-chain dehydrogenases/reductases (SDR) family. As to quaternary structure, homodimer and homotetramer. As to expression, peltate glandular trichomes.

It localises to the mitochondrion. It catalyses the reaction (1S,6R)-isopiperitenol + NAD(+) = (6R)-isopiperitenone + NADH + H(+). The catalysed reaction is (1S,5R)-carveol + NADP(+) = (R)-carvone + NADPH + H(+). Functionally, involved in the biosynthesis of menthol and related monoterpenes in leaves. Can use (-)-trans-carveol and, with a lower relative velocity, (-)-trans-isopiperitenol, (+)-neomenthol, (+)-neoisomenthol and (-)-cis-isopiperitenol as substrates, but not (-)-cis-carvenol, (-)-menthol, (+)-isomenthol, 7-hydroxy-limonene, (-)-isopiperitenone or (-)-carvone. This chain is (-)-isopiperitenol/(-)-carveol dehydrogenase, mitochondrial, found in Mentha piperita (Peppermint).